The chain runs to 97 residues: Putative septation protein SpoVG (97 aa).

The protein belongs to the SpoVG family.

Functionally, could be involved in septation. The chain is Putative septation protein SpoVG from Borrelia garinii subsp. bavariensis (strain ATCC BAA-2496 / DSM 23469 / PBi) (Borreliella bavariensis).